The chain runs to 118 residues: 5-hydroxyisourate hydrolase (118 aa).

His-7, Arg-46, and Tyr-115 together coordinate substrate.

The protein belongs to the transthyretin family. 5-hydroxyisourate hydrolase subfamily. As to quaternary structure, homotetramer.

The enzyme catalyses 5-hydroxyisourate + H2O = 5-hydroxy-2-oxo-4-ureido-2,5-dihydro-1H-imidazole-5-carboxylate + H(+). Catalyzes the hydrolysis of 5-hydroxyisourate (HIU) to 2-oxo-4-hydroxy-4-carboxy-5-ureidoimidazoline (OHCU). The sequence is that of 5-hydroxyisourate hydrolase from Brucella suis biovar 1 (strain 1330).